A 259-amino-acid chain; its full sequence is Tegument protein UL51 homolog (259 aa).

Residue Cys-9 is the site of S-palmitoyl cysteine; by host attachment.

It belongs to the herpesviridae UL51 family. Oligomerizes. Interacts with ORF53; this interaction mediates ORF53 incorporation to virions. Post-translationally, phosphorylated. Palmitoylation is necessary for Golgi localization.

It localises to the virion tegument. It is found in the host cytoplasm. The protein resides in the host Golgi apparatus. Functionally, plays several roles during the time course of infection, including egress of virus particles from the perinuclear space and secondary envelopment of cytoplasmic capsids that bud into specific trans-Golgi network (TGN)-derived membranes. The protein is Tegument protein UL51 homolog of Varicella-zoster virus (strain Dumas) (HHV-3).